Here is a 199-residue protein sequence, read N- to C-terminus: Golgi to ER traffic protein 1 (199 aa).

The Lumenal portion of the chain corresponds to 1-11 (MLLPDLHPYTI). Residues 12 to 31 (LLSIFLVLVVKQLVATIGKS) traverse the membrane as a helical segment. Residues 32 to 115 (TIQEFVWLVY…SIDKASNALI (84 aa)) lie on the Cytoplasmic side of the membrane. A coiled-coil region spans residues 76 to 116 (YAKWTKLNRQADKLSAELQKLNQEIQQQKSSIDKASNALIL). A helical membrane pass occupies residues 116-136 (LVLTTLPIWIARVFYRKTHLF). Over 137 to 160 (YIRQGIFPKYVEWVLALPFLPNGA) the chain is Lumenal. Residues 161 to 177 (VGLTIWMFAVNSVVSNF) form a helical membrane-spanning segment. Over 178–199 (SFLVSFPFAKRVSKPVRDTKVE) the chain is Cytoplasmic.

The protein belongs to the WRB/GET1 family. Component of the Golgi to ER traffic (GET) complex, which is composed of GET1, GET2 and GET3. Within the complex, GET1 and GET2 form a heterotetramer which is stabilized by phosphatidylinositol binding and which binds to the GET3 homodimer.

The protein resides in the endoplasmic reticulum membrane. Its subcellular location is the golgi apparatus membrane. Its function is as follows. Required for the post-translational delivery of tail-anchored (TA) proteins to the endoplasmic reticulum. Together with GET2, acts as a membrane receptor for soluble GET3, which recognizes and selectively binds the transmembrane domain of TA proteins in the cytosol. The GET complex cooperates with the HDEL receptor ERD2 to mediate the ATP-dependent retrieval of resident ER proteins that contain a C-terminal H-D-E-L retention signal from the Golgi to the ER. This is Golgi to ER traffic protein 1 from Candida albicans (strain WO-1) (Yeast).